Reading from the N-terminus, the 444-residue chain is Argininosuccinate synthase (444 aa).

Residues 18–26 (AFSGGLDTS) and alanine 44 each bind ATP. Tyrosine 100 lines the L-citrulline pocket. ATP contacts are provided by glycine 130 and threonine 132. L-aspartate-binding residues include threonine 132, asparagine 136, and aspartate 137. Residue asparagine 136 coordinates L-citrulline. Aspartate 137 contacts ATP. Residues arginine 140 and serine 193 each coordinate L-citrulline. An ATP-binding site is contributed by aspartate 195. 3 residues coordinate L-citrulline: threonine 202, glutamate 204, and glutamate 281.

This sequence belongs to the argininosuccinate synthase family. Type 2 subfamily. In terms of assembly, homotetramer.

The protein resides in the cytoplasm. The catalysed reaction is L-citrulline + L-aspartate + ATP = 2-(N(omega)-L-arginino)succinate + AMP + diphosphate + H(+). It participates in amino-acid biosynthesis; L-arginine biosynthesis; L-arginine from L-ornithine and carbamoyl phosphate: step 2/3. The sequence is that of Argininosuccinate synthase from Histophilus somni (strain 129Pt) (Haemophilus somnus).